The sequence spans 129 residues: M-zodatoxin-Lt8b (129 aa).

The first 20 residues, 1-20 (MKYFVVALALVAAFACIAES), serve as a signal peptide directing secretion. A propeptide spanning residues 21-60 (KPAESEHELAEVEEENELADLEDAVWLEHLADLSDLEEAR) is cleaved from the precursor. The Processing quadruplet motif signature appears at 57-60 (EEAR).

Post-translationally, cleavage of the propeptide depends on the processing quadruplet motif (XXXR, with at least one of X being E). As to expression, expressed by the venom gland.

Its subcellular location is the secreted. Its function is as follows. Insecticidal, cytolytic and antimicrobial peptide. Forms voltage-dependent, ion-permeable channels in membranes. At high concentration causes cell membrane lysis. This is M-zodatoxin-Lt8b (cit 1-2) from Lachesana tarabaevi (Spider).